A 297-amino-acid polypeptide reads, in one-letter code: MDRAQLRGMGVALITPFDEKGEVDHESLRLLADYQVAGGADYIVALGTTGESPTIEEAERSAILQTVREAVAGRCPIIVGAGGNYTERLVNRIQAMDKTGVDAILSVAPYYNKPTQEGIYRHYRTLAESTDTSIILYNVPGRTGVNIKSETTLRLATDCPNIIGIKEASGNVDQVRAIVLEKPDPFIVLSGDDHLSLSFIKEGAEGVISVIGNAYPELFSRLIHLCLENRFEEAETIQQRLEGMCYLMFVDGNPAGIKELLYQKGLIRHNILRLPLVSASDSTSTLIARVRNQIEQR.

T49 contacts pyruvate. The active-site Proton donor/acceptor is Y137. Residue K166 is the Schiff-base intermediate with substrate of the active site. I208 serves as a coordination point for pyruvate.

Belongs to the DapA family. As to quaternary structure, homotetramer; dimer of dimers.

Its subcellular location is the cytoplasm. The catalysed reaction is L-aspartate 4-semialdehyde + pyruvate = (2S,4S)-4-hydroxy-2,3,4,5-tetrahydrodipicolinate + H2O + H(+). Its pathway is amino-acid biosynthesis; L-lysine biosynthesis via DAP pathway; (S)-tetrahydrodipicolinate from L-aspartate: step 3/4. Catalyzes the condensation of (S)-aspartate-beta-semialdehyde [(S)-ASA] and pyruvate to 4-hydroxy-tetrahydrodipicolinate (HTPA). This Porphyromonas gingivalis (strain ATCC 33277 / DSM 20709 / CIP 103683 / JCM 12257 / NCTC 11834 / 2561) protein is 4-hydroxy-tetrahydrodipicolinate synthase.